The following is a 479-amino-acid chain: ATP-dependent RNA helicase DbpA (479 aa).

A Q motif motif is present at residues 2–30 (SHFKNYQISHDILRALEGLGYTEPTKVQQ). In terms of domain architecture, Helicase ATP-binding spans 33 to 203 (IPAALERKDL…RQYMQNPEHI (171 aa)). 46 to 53 (SQTGSGKT) contacts ATP. A DEAD box motif is present at residues 151-154 (DEAD). The Helicase C-terminal domain occupies 214 to 374 (NIEHAVIQVR…KIEAPSQEEV (161 aa)). Residues 404 to 479 (MKLYFNGGKK…KQLKVNKANK (76 aa)) form an involved in 23S rRNA binding region.

Belongs to the DEAD box helicase family. DbpA subfamily. In terms of assembly, may interact with RNA helicases CshA and CshB.

It is found in the cytoplasm. It catalyses the reaction ATP + H2O = ADP + phosphate + H(+). With respect to regulation, ATPase activity is stimulated by interaction with RNA. Its function is as follows. DEAD-box RNA helicase involved in the assembly of the 50S ribosomal subunit. Has an RNA-dependent ATPase activity, which is specific for 23S rRNA, and a 3' to 5' RNA helicase activity that uses the energy of ATP hydrolysis to destabilize and unwind short rRNA duplexes. The sequence is that of ATP-dependent RNA helicase DbpA from Bacillus subtilis (strain 168).